Consider the following 130-residue polypeptide: Small ribosomal subunit protein uS9 (130 aa).

It belongs to the universal ribosomal protein uS9 family.

The chain is Small ribosomal subunit protein uS9 from Nitrosospira multiformis (strain ATCC 25196 / NCIMB 11849 / C 71).